Reading from the N-terminus, the 401-residue chain is tRNA(Ile)-lysidine synthase (401 aa).

An ATP-binding site is contributed by serine 17–serine 22.

It belongs to the tRNA(Ile)-lysidine synthase family.

Its subcellular location is the cytoplasm. The catalysed reaction is cytidine(34) in tRNA(Ile2) + L-lysine + ATP = lysidine(34) in tRNA(Ile2) + AMP + diphosphate + H(+). Functionally, ligates lysine onto the cytidine present at position 34 of the AUA codon-specific tRNA(Ile) that contains the anticodon CAU, in an ATP-dependent manner. Cytidine is converted to lysidine, thus changing the amino acid specificity of the tRNA from methionine to isoleucine. This is tRNA(Ile)-lysidine synthase from Mycoplasma mycoides subsp. mycoides SC (strain CCUG 32753 / NCTC 10114 / PG1).